Reading from the N-terminus, the 940-residue chain is Isoleucine--tRNA ligase (940 aa).

The short motif at 58 to 68 is the 'HIGH' region element; it reads PYANGSIHIGH. Residue glutamate 564 coordinates L-isoleucyl-5'-AMP. A 'KMSKS' region motif is present at residues 605 to 609; sequence KMSKS. Lysine 608 is an ATP binding site. Positions 903, 906, 923, and 926 each coordinate Zn(2+).

The protein belongs to the class-I aminoacyl-tRNA synthetase family. IleS type 1 subfamily. Monomer. Zn(2+) serves as cofactor.

The protein resides in the cytoplasm. The catalysed reaction is tRNA(Ile) + L-isoleucine + ATP = L-isoleucyl-tRNA(Ile) + AMP + diphosphate. Catalyzes the attachment of isoleucine to tRNA(Ile). As IleRS can inadvertently accommodate and process structurally similar amino acids such as valine, to avoid such errors it has two additional distinct tRNA(Ile)-dependent editing activities. One activity is designated as 'pretransfer' editing and involves the hydrolysis of activated Val-AMP. The other activity is designated 'posttransfer' editing and involves deacylation of mischarged Val-tRNA(Ile). This Shewanella amazonensis (strain ATCC BAA-1098 / SB2B) protein is Isoleucine--tRNA ligase.